The following is a 262-amino-acid chain: Acyl-[acyl-carrier-protein]--UDP-N-acetylglucosamine O-acyltransferase (262 aa).

Belongs to the transferase hexapeptide repeat family. LpxA subfamily. As to quaternary structure, homotrimer.

Its subcellular location is the cytoplasm. It catalyses the reaction a (3R)-hydroxyacyl-[ACP] + UDP-N-acetyl-alpha-D-glucosamine = a UDP-3-O-[(3R)-3-hydroxyacyl]-N-acetyl-alpha-D-glucosamine + holo-[ACP]. It functions in the pathway glycolipid biosynthesis; lipid IV(A) biosynthesis; lipid IV(A) from (3R)-3-hydroxytetradecanoyl-[acyl-carrier-protein] and UDP-N-acetyl-alpha-D-glucosamine: step 1/6. In terms of biological role, involved in the biosynthesis of lipid A, a phosphorylated glycolipid that anchors the lipopolysaccharide to the outer membrane of the cell. The polypeptide is Acyl-[acyl-carrier-protein]--UDP-N-acetylglucosamine O-acyltransferase (Campylobacter curvus (strain 525.92)).